A 654-amino-acid chain; its full sequence is U-box domain-containing protein 12 (654 aa).

Residues 255–329 form the U-box domain; sequence IPPEEFRCPI…AQWCESNGIE (75 aa). The segment at 329 to 352 is disordered; it reads EPPKRPNISQPSSKASSSSSAPDD. A compositionally biased stretch (low complexity) spans 337-349; the sequence is SQPSSKASSSSSA. ARM repeat units follow at residues 387–427, 430–469, 471–510, 512–551, and 553–592; these read NHNR…NLSI, ENKG…SLSV, DENK…NLCI, QGNK…ILSS, and PDGK…HLCS.

It catalyses the reaction S-ubiquitinyl-[E2 ubiquitin-conjugating enzyme]-L-cysteine + [acceptor protein]-L-lysine = [E2 ubiquitin-conjugating enzyme]-L-cysteine + N(6)-ubiquitinyl-[acceptor protein]-L-lysine.. It functions in the pathway protein modification; protein ubiquitination. Functions as an E3 ubiquitin ligase. This chain is U-box domain-containing protein 12 (PUB12), found in Arabidopsis thaliana (Mouse-ear cress).